The sequence spans 335 residues: Eukaryotic translation initiation factor 3 subunit I (335 aa).

WD repeat units follow at residues Gly-8–Thr-47, Gly-50–Asp-91, Cys-145–Asn-184, Glu-189–Thr-228, and Gly-286–Met-325.

This sequence belongs to the eIF-3 subunit I family. As to quaternary structure, component of the eukaryotic translation initiation factor 3 (eIF-3) complex.

It localises to the cytoplasm. Component of the eukaryotic translation initiation factor 3 (eIF-3) complex, which is involved in protein synthesis of a specialized repertoire of mRNAs and, together with other initiation factors, stimulates binding of mRNA and methionyl-tRNAi to the 40S ribosome. The eIF-3 complex specifically targets and initiates translation of a subset of mRNAs involved in cell proliferation. The chain is Eukaryotic translation initiation factor 3 subunit I (tif34) from Aspergillus oryzae (strain ATCC 42149 / RIB 40) (Yellow koji mold).